The chain runs to 337 residues: 3-isopropylmalate dehydrogenase (337 aa).

Residues Arg-86, Arg-96, Arg-117, and Asp-201 each contribute to the substrate site. 3 residues coordinate Mg(2+): Asp-201, Asp-225, and Asp-229. Position 258-270 (258-270 (GAAFDIAGKNIGN)) interacts with NAD(+).

Belongs to the isocitrate and isopropylmalate dehydrogenases family. As to quaternary structure, homotetramer. It depends on Mg(2+) as a cofactor. Requires Mn(2+) as cofactor.

The protein resides in the cytoplasm. The enzyme catalyses (2R,3S)-3-isopropylmalate + NAD(+) = 4-methyl-2-oxopentanoate + CO2 + NADH. It participates in amino-acid biosynthesis; L-leucine biosynthesis; L-leucine from 3-methyl-2-oxobutanoate: step 3/4. Its function is as follows. Catalyzes the oxidation of 3-carboxy-2-hydroxy-4-methylpentanoate (3-isopropylmalate) to 3-carboxy-4-methyl-2-oxopentanoate. The product decarboxylates to 4-methyl-2 oxopentanoate. The sequence is that of 3-isopropylmalate dehydrogenase (leuB) from Sulfurisphaera tokodaii (strain DSM 16993 / JCM 10545 / NBRC 100140 / 7) (Sulfolobus tokodaii).